The following is a 233-amino-acid chain: Ribonuclease HII (233 aa).

The region spanning 21–211 is the RNase H type-2 domain; sequence KVIAGVDEVG…LDALPQWRHL (191 aa). A divalent metal cation contacts are provided by aspartate 27, glutamate 28, and aspartate 119.

It belongs to the RNase HII family. It depends on Mn(2+) as a cofactor. Mg(2+) is required as a cofactor.

The protein localises to the cytoplasm. It catalyses the reaction Endonucleolytic cleavage to 5'-phosphomonoester.. Endonuclease that specifically degrades the RNA of RNA-DNA hybrids. In Streptomyces avermitilis (strain ATCC 31267 / DSM 46492 / JCM 5070 / NBRC 14893 / NCIMB 12804 / NRRL 8165 / MA-4680), this protein is Ribonuclease HII.